The sequence spans 161 residues: Small ribosomal subunit protein uS19 (161 aa).

Positions 1–19 are enriched in basic residues; that stretch reads MARQKKYSGKGGARKKNKQ. The segment at 1 to 26 is disordered; it reads MARQKKYSGKGGARKKNKQKQNVAPR.

The protein belongs to the universal ribosomal protein uS19 family.

In terms of biological role, protein S19 forms a complex with S13 that binds strongly to the 16S ribosomal RNA. The protein is Small ribosomal subunit protein uS19 of Methanococcus maripaludis (strain DSM 14266 / JCM 13030 / NBRC 101832 / S2 / LL).